Here is a 982-residue protein sequence, read N- to C-terminus: Probable beta-galactosidase C (982 aa).

A signal peptide spans 1–21 (MRLFALLPVLLGLISSHFVSA). Positions 80, 125, 126, 127, and 185 each coordinate substrate. The Proton donor role is filled by Glu-186. Substrate is bound at residue Tyr-249. Cys-255 and Cys-302 are disulfide-bonded. Asn-274 carries an N-linked (GlcNAc...) asparagine glycan. The Nucleophile role is filled by Glu-285. Tyr-351 lines the substrate pocket. N-linked (GlcNAc...) asparagine glycans are attached at residues Asn-389, Asn-434, Asn-600, Asn-675, Asn-718, and Asn-785.

This sequence belongs to the glycosyl hydrolase 35 family.

Its subcellular location is the secreted. It catalyses the reaction Hydrolysis of terminal non-reducing beta-D-galactose residues in beta-D-galactosides.. Its function is as follows. Cleaves beta-linked terminal galactosyl residues from gangliosides, glycoproteins, and glycosaminoglycans. This is Probable beta-galactosidase C (lacC) from Penicillium rubens (strain ATCC 28089 / DSM 1075 / NRRL 1951 / Wisconsin 54-1255) (Penicillium chrysogenum).